A 97-amino-acid polypeptide reads, in one-letter code: Citrate lyase acyl carrier protein (97 aa).

The residue at position 14 (Ser14) is an O-(phosphoribosyl dephospho-coenzyme A)serine.

This sequence belongs to the CitD family. As to quaternary structure, oligomer with a subunit composition of (alpha,beta,gamma)6.

It localises to the cytoplasm. Covalent carrier of the coenzyme of citrate lyase. In Leuconostoc citreum (strain KM20), this protein is Citrate lyase acyl carrier protein.